A 520-amino-acid polypeptide reads, in one-letter code: Diacylglycerol O-acyltransferase 1 (520 aa).

Disordered stretches follow at residues Arg-28–Ala-57 and Gln-72–Arg-116. Over residues Asp-34–Gly-54 the composition is skewed to low complexity. Gly residues predominate over residues Asn-81–Arg-98. 7 helical membrane-spanning segments follow: residues Ala-126–Val-146, Trp-176–Glu-196, Pro-207–Val-227, Ser-233–Val-253, Val-276–Tyr-296, Lys-317–Val-337, and Val-365–Leu-385. Positions Phe-392–Asn-398 match the FYXDWWN motif motif. Helical transmembrane passes span Leu-434–Pro-454, Leu-457–Asn-477, and Val-487–Leu-507. Residue His-447 is part of the active site.

This sequence belongs to the membrane-bound acyltransferase family. Sterol o-acyltransferase subfamily. Interacts with LPCAT2 and LPAT2. As to expression, ubiquitous. Highest expression in young developing seeds.

The protein localises to the plastid. It localises to the chloroplast membrane. The protein resides in the endoplasmic reticulum membrane. It catalyses the reaction an acyl-CoA + a 1,2-diacyl-sn-glycerol = a triacyl-sn-glycerol + CoA. The enzyme catalyses 1,2-di-(9Z-octadecenoyl)-sn-glycerol + (9Z)-octadecenoyl-CoA = 1,2,3-tri-(9Z-octadecenoyl)-glycerol + CoA. The protein operates within glycerolipid metabolism; triacylglycerol biosynthesis. With respect to regulation, partially inhibited by niacin. In terms of biological role, major contributor to triacylglycerol (TAG) synthesis and oil accumulation in seeds. Catalyzes the acylation of the sn-3 hydroxy group of sn-1,2-diacylglycerol using acyl-CoA. Can use palmitoyl-CoA and oleoyl-CoA as substrates. Can use oleoyl-CoA and linoleoyl-CoA as substrates. Has substrate preference for oleoyl-CoA compared to linoleoyl-CoA. Has complementary functions with PDAT1 that are essential for triacylglycerol synthesis and normal development of both seeds and pollen. In Arabidopsis thaliana (Mouse-ear cress), this protein is Diacylglycerol O-acyltransferase 1.